The following is a 287-amino-acid chain: Elongation factor Ts (287 aa).

The involved in Mg(2+) ion dislocation from EF-Tu stretch occupies residues 80–83; it reads TDFL.

Belongs to the EF-Ts family.

It localises to the cytoplasm. Associates with the EF-Tu.GDP complex and induces the exchange of GDP to GTP. It remains bound to the aminoacyl-tRNA.EF-Tu.GTP complex up to the GTP hydrolysis stage on the ribosome. This is Elongation factor Ts from Pseudomonas putida (strain W619).